Consider the following 446-residue polypeptide: Phosphoglucosamine mutase (446 aa).

Residue Ser101 is the Phosphoserine intermediate of the active site. Ser101, Asp240, Asp242, and Asp244 together coordinate Mg(2+). A Phosphoserine modification is found at Ser101.

This sequence belongs to the phosphohexose mutase family. The cofactor is Mg(2+). Activated by phosphorylation.

The catalysed reaction is alpha-D-glucosamine 1-phosphate = D-glucosamine 6-phosphate. In terms of biological role, catalyzes the conversion of glucosamine-6-phosphate to glucosamine-1-phosphate. This is Phosphoglucosamine mutase from Coxiella burnetii (strain Dugway 5J108-111).